Consider the following 276-residue polypeptide: Secretagogin (276 aa).

6 consecutive EF-hand domains span residues 12–47 (LDAA…MLTK), 71–93 (DVSK…EDEN), 105–140 (DSSV…LFLH), 149–184 (KLEE…QENF), 197–232 (ERKR…MMEL), and 240–276 (VDLD…KINP). 23 residues coordinate Ca(2+): D71, S73, D75, C77, E82, D118, D120, S122, E129, D162, N164, D166, R168, D173, D210, S212, T214, E221, D254, N256, D258, K260, and E265.

The protein localises to the cytoplasm. It localises to the secreted. Its subcellular location is the cytoplasmic vesicle. The protein resides in the secretory vesicle membrane. The polypeptide is Secretagogin (SCGN) (Bos taurus (Bovine)).